The sequence spans 189 residues: Capsid protein (189 aa).

The protein belongs to the tymoviruses capsid protein family.

The protein localises to the virion. Its function is as follows. Self-assembles to form a T=3 icosahedral capsid composed of 180 copies of the capsid protein. The capsid encapsulates the single-stranded RNA genome. A pentameric unit may be lost during decapsidation. The polypeptide is Capsid protein (Brassica).